Here is a 422-residue protein sequence, read N- to C-terminus: UDP-N-acetylglucosamine 1-carboxyvinyltransferase (422 aa).

22-23 (KN) is a phosphoenolpyruvate binding site. Arg93 serves as a coordination point for UDP-N-acetyl-alpha-D-glucosamine. Cys117 acts as the Proton donor in catalysis. Position 117 is a 2-(S-cysteinyl)pyruvic acid O-phosphothioketal (Cys117). UDP-N-acetyl-alpha-D-glucosamine is bound by residues 122 to 126 (RPVDL), Asp308, and Leu330.

It belongs to the EPSP synthase family. MurA subfamily.

Its subcellular location is the cytoplasm. The catalysed reaction is phosphoenolpyruvate + UDP-N-acetyl-alpha-D-glucosamine = UDP-N-acetyl-3-O-(1-carboxyvinyl)-alpha-D-glucosamine + phosphate. It functions in the pathway cell wall biogenesis; peptidoglycan biosynthesis. Cell wall formation. Adds enolpyruvyl to UDP-N-acetylglucosamine. The protein is UDP-N-acetylglucosamine 1-carboxyvinyltransferase of Helicobacter pylori (strain HPAG1).